The following is a 479-amino-acid chain: Citrate synthase, mitochondrial (479 aa).

Residues 1 to 37 (MSAILSTTSKSFLSRGSTRQCQNMQKALFALLNARHY) constitute a mitochondrion transit peptide. Active-site residues include H312, H358, and D413. A Phosphoserine modification is found at S462.

Belongs to the citrate synthase family. Monomer and homodimer. Exists as an inactive monomer when phosphorylated. Homodimerization is dependent on dephosphorylation of Ser-462 by PTC7 and is required for activity. Post-translationally, phosphorylation at Ser-462. Dephosphorylated at Ser-462 by PTC7.

It localises to the mitochondrion matrix. It carries out the reaction oxaloacetate + acetyl-CoA + H2O = citrate + CoA + H(+). Its pathway is carbohydrate metabolism; tricarboxylic acid cycle; isocitrate from oxaloacetate: step 1/2. With respect to regulation, phosphorylation at Ser-462 inhibits catalytic activity. Dephosphorylation at Ser-462 by PTC7 enhances catalytic activity. Specific citrate synthase with catalytic activity only with acetyl-CoA. The chain is Citrate synthase, mitochondrial from Saccharomyces cerevisiae (strain ATCC 204508 / S288c) (Baker's yeast).